The sequence spans 493 residues: Arginine decarboxylase (493 aa).

Lysine 229 is subject to N6-(pyridoxal phosphate)lysine.

It belongs to the Orn/Lys/Arg decarboxylase class-I family. Requires pyridoxal 5'-phosphate as cofactor.

It localises to the cytoplasm. It catalyses the reaction L-arginine + H(+) = agmatine + CO2. It functions in the pathway amine and polyamine biosynthesis; agmatine biosynthesis; agmatine from L-arginine: step 1/1. Functionally, catalyzes the formation of agmatine from arginine. This is Arginine decarboxylase (speA) from Bacillus anthracis.